Reading from the N-terminus, the 493-residue chain is Cysteine--tRNA ligase (493 aa).

A Zn(2+)-binding site is contributed by cysteine 29. Positions 31–41 match the 'HIGH' region motif; that stretch reads VTVYDLCHLGH. Zn(2+)-binding residues include cysteine 213, histidine 238, and glutamate 242. Positions 270–274 match the 'KMSKS' region motif; it reads KMSKS. Lysine 273 contributes to the ATP binding site.

It belongs to the class-I aminoacyl-tRNA synthetase family. Monomer. Zn(2+) is required as a cofactor.

Its subcellular location is the cytoplasm. The catalysed reaction is tRNA(Cys) + L-cysteine + ATP = L-cysteinyl-tRNA(Cys) + AMP + diphosphate. The sequence is that of Cysteine--tRNA ligase from Parasynechococcus marenigrum (strain WH8102).